The sequence spans 462 residues: Asparagine--tRNA ligase (462 aa).

The protein belongs to the class-II aminoacyl-tRNA synthetase family. Homodimer.

It localises to the cytoplasm. The catalysed reaction is tRNA(Asn) + L-asparagine + ATP = L-asparaginyl-tRNA(Asn) + AMP + diphosphate + H(+). The polypeptide is Asparagine--tRNA ligase (Thermosynechococcus vestitus (strain NIES-2133 / IAM M-273 / BP-1)).